A 70-amino-acid polypeptide reads, in one-letter code: Cold shock-like protein CspF (70 aa).

Positions 7–67 (GIVKTFDGKS…GLRGPSAANV (61 aa)) constitute a CSD domain.

The protein resides in the cytoplasm. The polypeptide is Cold shock-like protein CspF (cspF) (Escherichia coli (strain K12)).